Consider the following 64-residue polypeptide: Large ribosomal subunit protein bL35 (64 aa).

This sequence belongs to the bacterial ribosomal protein bL35 family.

The sequence is that of Large ribosomal subunit protein bL35 from Acinetobacter baumannii (strain AB307-0294).